We begin with the raw amino-acid sequence, 311 residues long: Vomeronasal type-1 receptor 105 (311 aa).

Topologically, residues 1–17 (MMNKNSRLYTDSNIRNT) are extracellular. The chain crosses the membrane as a helical span at residues 18-38 (FFAEIGIGVSANSLLLLFNIF). Topologically, residues 39–50 (KLICGQRSRLTD) are cytoplasmic. The helical transmembrane segment at 51–71 (LPIGLLSLINLLMLLMTAFIA) threads the bilayer. Over 72-94 (TDTFISWRGWDDIICKSLLYLYR) the chain is Extracellular. Cysteines 86 and 173 form a disulfide. Residues 95 to 115 (TFRGLSLCTSCLLSVLQAIIL) traverse the membrane as a helical segment. Topologically, residues 116–135 (SPRSSCLAKFKHKPSHHISC) are cytoplasmic. A helical membrane pass occupies residues 136-156 (AILSLSVLYMFISSHLLVSII). Topologically, residues 157-188 (ATPNLTTNDFIHVTQWCSILPMSYLMQSMFST) are extracellular. The N-linked (GlcNAc...) asparagine glycan is linked to Asn-160. Residues 189 to 209 (LLAIRDVFLISLMVLSTWYMV) form a helical membrane-spanning segment. The Cytoplasmic portion of the chain corresponds to 210–239 (ALLCRHRKQTRHLQGTSLSPKASPEQRATR). The chain crosses the membrane as a helical span at residues 240–260 (SILMLMSLFVLMSVFDSIVCS). Topologically, residues 261-271 (SRTMYLNDPIS) are extracellular. A helical transmembrane segment spans residues 272 to 292 (YSYQLFMVHIYATVSPFVFIV). Over 293 to 311 (TEKHIVNSLRSMCVKVMNV) the chain is Cytoplasmic.

Belongs to the G-protein coupled receptor 1 family. In terms of tissue distribution, expressed in 1-4% of neurons of the vomeronasal organ. Only one pheromone receptor gene may be expressed in a particular neuron. Not expressed in the main olfactory epithelium.

Its subcellular location is the cell membrane. Putative pheromone receptor implicated in the regulation of social as well as reproductive behavior. The chain is Vomeronasal type-1 receptor 105 (Vom1r105) from Rattus norvegicus (Rat).